A 578-amino-acid chain; its full sequence is Arginine--tRNA ligase (578 aa).

Positions 127–137 (PNLAKEMHVGH) match the 'HIGH' region motif.

It belongs to the class-I aminoacyl-tRNA synthetase family. As to quaternary structure, monomer.

The protein resides in the cytoplasm. The enzyme catalyses tRNA(Arg) + L-arginine + ATP = L-arginyl-tRNA(Arg) + AMP + diphosphate. The protein is Arginine--tRNA ligase of Pseudomonas syringae pv. tomato (strain ATCC BAA-871 / DC3000).